Consider the following 615-residue polypeptide: RNA polymerase sigma factor RpoD (615 aa).

The disordered stretch occupies residues 177–215 (APTATHVGSELSQEDLDDDEDEDEEDGDDDAADDDNSID). Residues 188–214 (SQEDLDDDEDEDEEDGDDDAADDDNSI) show a composition bias toward acidic residues. The sigma-70 factor domain-2 stretch occupies residues 381–451 (MVEANLRLVI…TRSIADQART (71 aa)). Positions 405-408 (DLIQ) match the Interaction with polymerase core subunit RpoC motif. The sigma-70 factor domain-3 stretch occupies residues 460–536 (ETINKLNRIS…DTTLELPLDS (77 aa)). Positions 549-602 (VLAGLTAREAKVLRMRFGIDMNTDHTLEEVGKQFDVTRERIRQIEAKALRKLRH) are sigma-70 factor domain-4. The H-T-H motif DNA-binding region spans 575-594 (LEEVGKQFDVTRERIRQIEA).

The protein belongs to the sigma-70 factor family. RpoD/SigA subfamily. In terms of assembly, interacts transiently with the RNA polymerase catalytic core.

The protein localises to the cytoplasm. In terms of biological role, sigma factors are initiation factors that promote the attachment of RNA polymerase to specific initiation sites and are then released. This sigma factor is the primary sigma factor during exponential growth. The chain is RNA polymerase sigma factor RpoD from Salmonella typhi.